The primary structure comprises 340 residues: Putative esterase YheT (340 aa).

Positions 73 to 312 (PRLVVFHGLE…TEHGGHVGFI (240 aa)) constitute an AB hydrolase-1 domain. Active-site charge relay system residues include Ser-153, Asp-280, and His-308.

It belongs to the AB hydrolase superfamily. AB hydrolase 4 family.

This Escherichia coli (strain K12) protein is Putative esterase YheT (yheT).